The chain runs to 378 residues: Alginate lyase (378 aa).

Residues 1–28 (MQTPKLIRPTLLSMAIVSSMAWATGASA) form the signal peptide. Residues 67-68 (SK), 140-141 (HT), and tyrosine 258 each bind substrate.

The protein belongs to the polysaccharide lyase 5 family.

It localises to the periplasm. The enzyme catalyses Eliminative cleavage of alginate to give oligosaccharides with 4-deoxy-alpha-L-erythro-hex-4-enuronosyl groups at their non-reducing ends and beta-D-mannuronate at their reducing end.. In terms of biological role, catalyzes the depolymerization of alginate by cleaving the beta-1,4 glycosidic bond between two adjacent sugar residues via a beta-elimination mechanism. May serve to degrade mislocalized alginate that is trapped in the periplasmic space. This Pseudomonas syringae pv. tomato (strain ATCC BAA-871 / DC3000) protein is Alginate lyase.